Here is a 348-residue protein sequence, read N- to C-terminus: Phenylalanine--tRNA ligase alpha subunit (348 aa).

Glu269 serves as a coordination point for Mg(2+).

This sequence belongs to the class-II aminoacyl-tRNA synthetase family. Phe-tRNA synthetase alpha subunit type 1 subfamily. Tetramer of two alpha and two beta subunits. Requires Mg(2+) as cofactor.

The protein resides in the cytoplasm. The catalysed reaction is tRNA(Phe) + L-phenylalanine + ATP = L-phenylalanyl-tRNA(Phe) + AMP + diphosphate + H(+). The protein is Phenylalanine--tRNA ligase alpha subunit of Dechloromonas aromatica (strain RCB).